Here is a 339-residue protein sequence, read N- to C-terminus: MIEYFCEYMFPLTVIALKVVAITIPLILCVAYLTYAERRVIGLMQLRRGPNVVGPFGLLQPIADAVKLLFKEPIIPTDADKILFILAPIITFVLSLIGWAVIPFSSGVVLADINVGVLYILAISSLSVYGIIIAGWASNSKYAFLGAIRSSAQMISYEVSMGLVIITVLLTTGTLNLSGIIEAQKTLPWWIDLMLLPMSIVFFISVLAETNRLPFDLPEAESELVAGYNVEYSSMGFALFFLGEYANMILVSAMTTTLFLGGYLPPFNLSFLDCIPGFFWFVFKVGFLLFCFLWIRATLPRYRYDQLMRLGWKVFLPFTLFGVVLVSSVLFYTDNLPSV.

A run of 9 helical transmembrane segments spans residues 10 to 30 (FPLT…ILCV), 50 to 70 (PNVV…KLLF), 82 to 102 (ILFI…WAVI), 115 to 135 (VGVL…IIAG), 161 to 181 (MGLV…SGII), 187 to 207 (LPWW…ISVL), 235 to 255 (MGFA…SAMT), 275 to 295 (IPGF…FLWI), and 311 to 331 (GWKV…SVLF).

This sequence belongs to the complex I subunit 1 family. NDH-1 is composed of 14 different subunits. Subunits NuoA, H, J, K, L, M, N constitute the membrane sector of the complex.

It is found in the cell inner membrane. The catalysed reaction is a quinone + NADH + 5 H(+)(in) = a quinol + NAD(+) + 4 H(+)(out). In terms of biological role, NDH-1 shuttles electrons from NADH, via FMN and iron-sulfur (Fe-S) centers, to quinones in the respiratory chain. The immediate electron acceptor for the enzyme in this species is believed to be ubiquinone. Couples the redox reaction to proton translocation (for every two electrons transferred, four hydrogen ions are translocated across the cytoplasmic membrane), and thus conserves the redox energy in a proton gradient. This subunit may bind ubiquinone. The polypeptide is NADH-quinone oxidoreductase subunit H (Rickettsia prowazekii (strain Madrid E)).